We begin with the raw amino-acid sequence, 524 residues long: Translation initiation factor eIF2B subunit delta (524 aa).

Residues 1–155 (MAAVAVAVRE…EHTPADDPTL (155 aa)) are disordered. The residue at position 2 (Ala-2) is an N-acetylalanine. 2 stretches are compositionally biased toward basic and acidic residues: residues 8–20 (VREE…KTEL) and 31–40 (LTQEEKLQLR). Ser-12 bears the Phosphoserine mark. A compositionally biased stretch (basic residues) spans 41 to 51 (KEKKQQKKKRK). Thr-86 is modified (phosphothreonine). Residues 96–121 (SKAELRAERRAKQEAERALKQARKGE) show a composition bias toward basic and acidic residues. Residues 130-140 (CPSTAGETTSG) are compositionally biased toward polar residues. Residues 171 to 180 (RKDYGSKVSL) are may bind the chemical integrated stress response (ISR) inhibitor ISRIB.

This sequence belongs to the eIF-2B alpha/beta/delta subunits family. In terms of assembly, component of the translation initiation factor 2B (eIF2B) complex which is a heterodecamer of two sets of five different subunits: alpha, beta, gamma, delta and epsilon. Subunits alpha, beta and delta comprise a regulatory subcomplex and subunits epsilon and gamma comprise a catalytic subcomplex. Within the complex, the hexameric regulatory complex resides at the center, with the two heterodimeric catalytic subcomplexes bound on opposite sides.

The protein localises to the cytoplasm. The protein resides in the cytosol. With respect to regulation, activated by the chemical integrated stress response (ISR) inhibitor ISRIB which stimulates guanine nucleotide exchange factor activity for both phosphorylated and unphosphorylated eIF2. Its function is as follows. Acts as a component of the translation initiation factor 2B (eIF2B) complex, which catalyzes the exchange of GDP for GTP on eukaryotic initiation factor 2 (eIF2) gamma subunit. Its guanine nucleotide exchange factor activity is repressed when bound to eIF2 complex phosphorylated on the alpha subunit, thereby limiting the amount of methionyl-initiator methionine tRNA available to the ribosome and consequently global translation is repressed. In Mus musculus (Mouse), this protein is Translation initiation factor eIF2B subunit delta (Eif2b4).